The following is a 296-amino-acid chain: Cytidine deaminase (296 aa).

2 CMP/dCMP-type deaminase domains span residues 47 to 167 and 186 to 296; these read SQDE…FGPA and ESAD…VDPV. 88 to 90 lines the substrate pocket; it reads NLE. Zn(2+) is bound at residue histidine 101. The Proton donor role is filled by glutamate 103. Positions 128 and 131 each coordinate Zn(2+).

Belongs to the cytidine and deoxycytidylate deaminase family. Homodimer. It depends on Zn(2+) as a cofactor.

The enzyme catalyses cytidine + H2O + H(+) = uridine + NH4(+). The catalysed reaction is 2'-deoxycytidine + H2O + H(+) = 2'-deoxyuridine + NH4(+). This enzyme scavenges exogenous and endogenous cytidine and 2'-deoxycytidine for UMP synthesis. The polypeptide is Cytidine deaminase (Shewanella loihica (strain ATCC BAA-1088 / PV-4)).